A 115-amino-acid polypeptide reads, in one-letter code: Splicing factor 3B subunit 6-like protein (115 aa).

Residues 9–22 form an interaction with pre-mRNA branch site region; that stretch reads EVNSILFIKNLSFK. Residues 12-87 enclose the RRM domain; the sequence is SILFIKNLSF…RYLVVHYYNP (76 aa).

Its subcellular location is the nucleus. Functionally, necessary for the splicing of pre-mRNA. In Schizosaccharomyces pombe (strain 972 / ATCC 24843) (Fission yeast), this protein is Splicing factor 3B subunit 6-like protein.